The primary structure comprises 285 residues: Glutamate racemase (285 aa).

Residues 28 to 29 (DS) and 60 to 61 (YG) each bind substrate. Catalysis depends on Cys-92, which acts as the Proton donor/acceptor. 93–94 (NT) is a substrate binding site. Catalysis depends on Cys-204, which acts as the Proton donor/acceptor. 205 to 206 (TH) is a binding site for substrate.

Belongs to the aspartate/glutamate racemases family.

The catalysed reaction is L-glutamate = D-glutamate. It participates in cell wall biogenesis; peptidoglycan biosynthesis. In terms of biological role, provides the (R)-glutamate required for cell wall biosynthesis. This is Glutamate racemase from Escherichia fergusonii (strain ATCC 35469 / DSM 13698 / CCUG 18766 / IAM 14443 / JCM 21226 / LMG 7866 / NBRC 102419 / NCTC 12128 / CDC 0568-73).